A 453-amino-acid chain; its full sequence is Ribulose bisphosphate carboxylase large chain (453 aa).

A propeptide spanning residues 1 to 2 (MS) is cleaved from the precursor. The residue at position 3 (P3) is an N-acetylproline. An N6,N6,N6-trimethyllysine modification is found at K14. Positions 123 and 173 each coordinate substrate. K175 functions as the Proton acceptor in the catalytic mechanism. K177 lines the substrate pocket. 3 residues coordinate Mg(2+): K201, D203, and E204. K201 bears the N6-carboxylysine mark. Residue H294 is the Proton acceptor of the active site. Substrate-binding residues include R295, H327, and S379.

It belongs to the RuBisCO large chain family. Type I subfamily. Heterohexadecamer of 8 large chains and 8 small chains; disulfide-linked. The disulfide link is formed within the large subunit homodimers. Requires Mg(2+) as cofactor. The disulfide bond which can form in the large chain dimeric partners within the hexadecamer appears to be associated with oxidative stress and protein turnover.

Its subcellular location is the plastid. The protein resides in the chloroplast. The catalysed reaction is 2 (2R)-3-phosphoglycerate + 2 H(+) = D-ribulose 1,5-bisphosphate + CO2 + H2O. It carries out the reaction D-ribulose 1,5-bisphosphate + O2 = 2-phosphoglycolate + (2R)-3-phosphoglycerate + 2 H(+). Its function is as follows. RuBisCO catalyzes two reactions: the carboxylation of D-ribulose 1,5-bisphosphate, the primary event in carbon dioxide fixation, as well as the oxidative fragmentation of the pentose substrate in the photorespiration process. Both reactions occur simultaneously and in competition at the same active site. The polypeptide is Ribulose bisphosphate carboxylase large chain (Galium parisiense (Wall bedstraw)).